The sequence spans 270 residues: Putative hydro-lyase Reut_A2449 (270 aa).

This sequence belongs to the D-glutamate cyclase family.

The chain is Putative hydro-lyase Reut_A2449 from Cupriavidus pinatubonensis (strain JMP 134 / LMG 1197) (Cupriavidus necator (strain JMP 134)).